A 784-amino-acid polypeptide reads, in one-letter code: DNA ligase (784 aa).

Residues 35–39 (DAEYD), 84–85 (SL), and Glu-117 each bind NAD(+). The N6-AMP-lysine intermediate role is filled by Lys-119. Residues Arg-140, Glu-177, Lys-294, and Lys-318 each coordinate NAD(+). 4 residues coordinate Zn(2+): Cys-412, Cys-415, Cys-442, and Cys-448. In terms of domain architecture, BRCT spans 703-784 (AEGLPLAGQT…FLALLRQLES (82 aa)).

Belongs to the NAD-dependent DNA ligase family. LigA subfamily. Mg(2+) is required as a cofactor. Requires Mn(2+) as cofactor.

It catalyses the reaction NAD(+) + (deoxyribonucleotide)n-3'-hydroxyl + 5'-phospho-(deoxyribonucleotide)m = (deoxyribonucleotide)n+m + AMP + beta-nicotinamide D-nucleotide.. Functionally, DNA ligase that catalyzes the formation of phosphodiester linkages between 5'-phosphoryl and 3'-hydroxyl groups in double-stranded DNA using NAD as a coenzyme and as the energy source for the reaction. It is essential for DNA replication and repair of damaged DNA. The protein is DNA ligase of Azotobacter vinelandii (strain DJ / ATCC BAA-1303).